We begin with the raw amino-acid sequence, 430 residues long: Adenylosuccinate synthetase (430 aa).

Residues 13–19 and 41–43 each bind GTP; these read GDEGKGK and GHT. The active-site Proton acceptor is D14. Positions 14 and 41 each coordinate Mg(2+). Residues 14-17, 39-42, T130, R144, Q225, T240, and R304 each bind IMP; these read DEGK and NAGH. H42 (proton donor) is an active-site residue. 300–306 lines the substrate pocket; the sequence is ASTGRPR. Residues R306, 332–334, and 414–416 each bind GTP; these read KLD and STG.

The protein belongs to the adenylosuccinate synthetase family. In terms of assembly, homodimer. Mg(2+) serves as cofactor.

It localises to the cytoplasm. The catalysed reaction is IMP + L-aspartate + GTP = N(6)-(1,2-dicarboxyethyl)-AMP + GDP + phosphate + 2 H(+). The protein operates within purine metabolism; AMP biosynthesis via de novo pathway; AMP from IMP: step 1/2. Functionally, plays an important role in the de novo pathway of purine nucleotide biosynthesis. Catalyzes the first committed step in the biosynthesis of AMP from IMP. The chain is Adenylosuccinate synthetase from Xylella fastidiosa (strain M23).